The primary structure comprises 1673 residues: Protein TIC 214 (1673 aa).

6 consecutive transmembrane segments (helical) span residues 18 to 38 (IINS…FSIG), 67 to 87 (FITG…HLAL), 90 to 110 (PHTI…CNTH), 127 to 147 (LSIQ…HFIL), 175 to 195 (VGWI…VVWI), and 218 to 238 (SMSI…YYLG).

The protein belongs to the TIC214 family. As to quaternary structure, part of the Tic complex.

The protein localises to the plastid. It is found in the chloroplast inner membrane. Its function is as follows. Involved in protein precursor import into chloroplasts. May be part of an intermediate translocation complex acting as a protein-conducting channel at the inner envelope. This chain is Protein TIC 214, found in Lactuca sativa (Garden lettuce).